We begin with the raw amino-acid sequence, 283 residues long: BTB/POZ domain-containing protein KCTD15 (283 aa).

Residues 1 to 32 (MPHRKERPSGSSLHTHGSTGTAEGGNMSRLSL) are disordered. Residues 9 to 21 (SGSSLHTHGSTGT) show a composition bias toward low complexity. Residues serine 31, serine 35, and serine 38 each carry the phosphoserine modification. Residues 56–126 (APVHIDVGGH…LRTSKLLLPD (71 aa)) form the BTB domain.

As to quaternary structure, forms oligomers, predominantly homopentamers. Interacts with KCTD1, probably forming heteropentamers depending on its abundance in a cell-type dependent manner. Interacts with TFAP2A; this interaction inhibits TFAP2A transcriptional activation.

Its subcellular location is the nucleus. During embryonic development, it is involved in neural crest formation. Inhibits AP2 transcriptional activity by interaction with its activation domain. This is BTB/POZ domain-containing protein KCTD15 (KCTD15) from Homo sapiens (Human).